A 273-amino-acid polypeptide reads, in one-letter code: Thioredoxin-like 1-3, chloroplastic (273 aa).

A chloroplast-targeting transit peptide spans 1 to 44 (MATDSFIKLNPISFNRARFDLRDFAGISPKSISSLCCISPRLIS). In terms of domain architecture, Thioredoxin spans 62–202 (LFSKKKIPAF…FKEALEKHGR (141 aa)). Residues C125 and C128 each act as nucleophile in the active site. The cysteines at positions 125 and 128 are disulfide-linked.

The protein belongs to the thioredoxin family.

The protein localises to the plastid. Its subcellular location is the chloroplast. Probable thiol-disulfide oxidoreductase that may participate in various redox reactions. The sequence is that of Thioredoxin-like 1-3, chloroplastic from Arabidopsis thaliana (Mouse-ear cress).